The chain runs to 62 residues: MIIAFQFALFALVAISFILVVGVPVILASPEGWSNTKNAVFSGASLWIFLVFVVGILNSFIA.

2 helical membrane passes run 8–28 (ALFA…VILA) and 41–61 (FSGA…NSFI).

This sequence belongs to the PsbZ family. In terms of assembly, PSII is composed of 1 copy each of membrane proteins PsbA, PsbB, PsbC, PsbD, PsbE, PsbF, PsbH, PsbI, PsbJ, PsbK, PsbL, PsbM, PsbT, PsbY, PsbZ, Psb30/Ycf12, at least 3 peripheral proteins of the oxygen-evolving complex and a large number of cofactors. It forms dimeric complexes.

Its subcellular location is the plastid. It localises to the chloroplast thylakoid membrane. Its function is as follows. May control the interaction of photosystem II (PSII) cores with the light-harvesting antenna, regulates electron flow through the 2 photosystem reaction centers. PSII is a light-driven water plastoquinone oxidoreductase, using light energy to abstract electrons from H(2)O, generating a proton gradient subsequently used for ATP formation. The protein is Photosystem II reaction center protein Z of Chara vulgaris (Common stonewort).